The chain runs to 127 residues: Classical arabinogalactan protein 10 (127 aa).

Residues Met1 to Ala21 form the signal peptide. Residue Gln22 is modified to Pyrrolidone carboxylic acid. The segment at Gln22 to Asn107 is disordered. 4-hydroxyproline occurs at positions 24, 26, 28, 32, and 36. 5 O-linked (Ara...) hydroxyproline glycosylation sites follow: Pro24, Pro26, Pro28, Pro32, and Pro36. Composition is skewed to pro residues over residues Gly25 to Pro39, Ser48 to Ser58, and Val66 to Ser86. Polar residues predominate over residues Thr98–Asn107. Asn107 is lipidated: GPI-anchor amidated asparagine. Positions Ala108–Leu127 are cleaved as a propeptide — removed in mature form.

This sequence belongs to the classical AGP family. Post-translationally, O-glycosylated on hydroxyprolines; noncontiguous hydroxylproline residues are glycosylated with arabinogalactan. In terms of tissue distribution, predominantly expressed in flowers and at a lower level in roots and siliques.

Its subcellular location is the cell membrane. Proteoglycan that seems to be implicated in diverse developmental roles such as differentiation, cell-cell recognition, embryogenesis and programmed cell death. The sequence is that of Classical arabinogalactan protein 10 (AGP10) from Arabidopsis thaliana (Mouse-ear cress).